A 328-amino-acid polypeptide reads, in one-letter code: Biotin synthase (328 aa).

A Radical SAM core domain is found at 48–275; the sequence is NRIQLSKLLN…KSHVRLTAGR (228 aa). [4Fe-4S] cluster-binding residues include cysteine 63, cysteine 67, and cysteine 70. Positions 107, 138, 198, and 270 each coordinate [2Fe-2S] cluster.

Belongs to the radical SAM superfamily. Biotin synthase family. As to quaternary structure, homodimer. Requires [4Fe-4S] cluster as cofactor. The cofactor is [2Fe-2S] cluster.

It carries out the reaction (4R,5S)-dethiobiotin + (sulfur carrier)-SH + 2 reduced [2Fe-2S]-[ferredoxin] + 2 S-adenosyl-L-methionine = (sulfur carrier)-H + biotin + 2 5'-deoxyadenosine + 2 L-methionine + 2 oxidized [2Fe-2S]-[ferredoxin]. The protein operates within cofactor biosynthesis; biotin biosynthesis; biotin from 7,8-diaminononanoate: step 2/2. Catalyzes the conversion of dethiobiotin (DTB) to biotin by the insertion of a sulfur atom into dethiobiotin via a radical-based mechanism. The chain is Biotin synthase from Brucella ovis (strain ATCC 25840 / 63/290 / NCTC 10512).